Reading from the N-terminus, the 488-residue chain is TOX high mobility group box family member 2 (488 aa).

The interval 76–114 (YEIPPITPPNLPEPSLLHLGDHEASYHSLCHGLTPNGLL) is required for transcriptional activation. Disordered stretches follow at residues 192–258 (RSSI…PQKP), 293–328 (WDSL…KQPM), and 363–473 (SLLP…ECGI). Over residues 204 to 216 (GSKSATPSPSSST) the composition is skewed to low complexity. Residues 222 to 239 (EVHFKISGEKRPSADPGK) are compositionally biased toward basic and acidic residues. Positions 223-252 (VHFKISGEKRPSADPGKKAKNPKKKKKKDP) match the Nuclear localization signal motif. Positions 240 to 250 (KAKNPKKKKKK) are enriched in basic residues. Positions 255–323 (PQKPVSAYAL…QANPPAKMLP (69 aa)) form a DNA-binding region, HMG box. Residues 302 to 316 (QSSPDQGETKSTQAN) are compositionally biased toward polar residues. Residues 443–460 (PSSSGSCSPGPSNPTSSG) are compositionally biased toward low complexity.

The protein localises to the nucleus. Putative transcriptional activator involved in the hypothalamo-pituitary-gonadal system. The sequence is that of TOX high mobility group box family member 2 (TOX2) from Homo sapiens (Human).